We begin with the raw amino-acid sequence, 459 residues long: Argininosuccinate lyase (459 aa).

This sequence belongs to the lyase 1 family. Argininosuccinate lyase subfamily.

Its subcellular location is the cytoplasm. The catalysed reaction is 2-(N(omega)-L-arginino)succinate = fumarate + L-arginine. The protein operates within amino-acid biosynthesis; L-arginine biosynthesis; L-arginine from L-ornithine and carbamoyl phosphate: step 3/3. In Lactococcus lactis subsp. cremoris (strain SK11), this protein is Argininosuccinate lyase.